Reading from the N-terminus, the 466-residue chain is Adenosylhomocysteinase (466 aa).

Substrate contacts are provided by Thr57, Asp132, and Glu192. Residue 193–195 (TTT) participates in NAD(+) binding. Positions 222 and 226 each coordinate substrate. NAD(+) is bound by residues Asn227, 256–261 (GYGDVG), Glu279, Asn314, 335–337 (IGH), and Asn380.

It belongs to the adenosylhomocysteinase family. It depends on NAD(+) as a cofactor.

It localises to the cytoplasm. It carries out the reaction S-adenosyl-L-homocysteine + H2O = L-homocysteine + adenosine. It functions in the pathway amino-acid biosynthesis; L-homocysteine biosynthesis; L-homocysteine from S-adenosyl-L-homocysteine: step 1/1. In terms of biological role, may play a key role in the regulation of the intracellular concentration of adenosylhomocysteine. The protein is Adenosylhomocysteinase of Brucella abortus (strain S19).